A 900-amino-acid chain; its full sequence is Xylanolytic transcriptional activator xlnR (900 aa).

The span at 53 to 71 shows a compositional bias: polar residues; sequence SREGGNSENNSTFKPSSVR. A disordered region spans residues 53-75; the sequence is SREGGNSENNSTFKPSSVRDSLA. A DNA-binding region (zn(2)-C6 fungal-type) is located at residues 98–124; that stretch reads CDQCNQLRTKCDGQNPCAHCIEFGLTC. 3 disordered regions span residues 137 to 169, 520 to 559, and 701 to 722; these read SKKDIAAAAAAAGHQGGMGNRSPTDRRLSQEPG, ELPPNASQPGQDGERENEGDNPSKRNQSLHGGNSNVNVTE, and EPPENPHIDHLSPSGRSSSTVG. Basic and acidic residues predominate over residues 531–542; the sequence is DGERENEGDNPS. Over residues 543 to 557 the composition is skewed to polar residues; it reads KRNQSLHGGNSNVNV. The segment covering 712-722 has biased composition (low complexity); the sequence is SPSGRSSSTVG.

Belongs to the xlnR/xlr1 family.

The protein localises to the nucleus. Functionally, transcriptional activator of the xylanolytic system. Involved in the regulation of extracellular cellulolytic and xylanolytic genes and in the regulation of the intracellular activities of D-xylose catabolic genes in the pentose catabolic pathway (PCP) in response to the presence of D-xylose. Binds to the DNA sequence 5'-GGNTAAA-3'. This is Xylanolytic transcriptional activator xlnR (xlnR) from Emericella nidulans (strain FGSC A4 / ATCC 38163 / CBS 112.46 / NRRL 194 / M139) (Aspergillus nidulans).